The following is a 293-amino-acid chain: Ribosomal protein L11 methyltransferase (293 aa).

Positions 145, 166, 188, and 230 each coordinate S-adenosyl-L-methionine.

This sequence belongs to the methyltransferase superfamily. PrmA family.

Its subcellular location is the cytoplasm. It carries out the reaction L-lysyl-[protein] + 3 S-adenosyl-L-methionine = N(6),N(6),N(6)-trimethyl-L-lysyl-[protein] + 3 S-adenosyl-L-homocysteine + 3 H(+). In terms of biological role, methylates ribosomal protein L11. The protein is Ribosomal protein L11 methyltransferase of Escherichia coli O7:K1 (strain IAI39 / ExPEC).